The following is a 519-amino-acid chain: Dihydropyrimidinase (519 aa).

Positions 67 and 69 each coordinate Zn(2+). The residue at position 79 (S79) is a Phosphoserine. K159 is a binding site for Zn(2+). The residue at position 159 (K159) is an N6-carboxylysine. Position 164 (Y164) interacts with substrate. The Zn(2+) site is built by H192 and H248. K256 carries the N6-succinyllysine modification. D326 contacts Zn(2+). N347 is a substrate binding site. T510 is modified (phosphothreonine).

This sequence belongs to the metallo-dependent hydrolases superfamily. Hydantoinase/dihydropyrimidinase family. As to quaternary structure, homotetramer. Requires Zn(2+) as cofactor. Carboxylation allows a single lysine to coordinate two zinc ions.

The catalysed reaction is 5,6-dihydrouracil + H2O = 3-(carbamoylamino)propanoate + H(+). In terms of biological role, catalyzes the second step of the reductive pyrimidine degradation, the reversible hydrolytic ring opening of dihydropyrimidines. Can catalyze the ring opening of 5,6-dihydrouracil to N-carbamyl-alanine and of 5,6-dihydrothymine to N-carbamyl-amino isobutyrate. In Rattus norvegicus (Rat), this protein is Dihydropyrimidinase (Dpys).